A 285-amino-acid chain; its full sequence is Acetylglutamate kinase (285 aa).

Substrate contacts are provided by residues 55 to 56, arginine 77, and asparagine 171; that span reads GG.

The protein belongs to the acetylglutamate kinase family. ArgB subfamily.

Its subcellular location is the cytoplasm. It carries out the reaction N-acetyl-L-glutamate + ATP = N-acetyl-L-glutamyl 5-phosphate + ADP. It participates in amino-acid biosynthesis; L-arginine biosynthesis; N(2)-acetyl-L-ornithine from L-glutamate: step 2/4. Catalyzes the ATP-dependent phosphorylation of N-acetyl-L-glutamate. This Chlorobaculum tepidum (strain ATCC 49652 / DSM 12025 / NBRC 103806 / TLS) (Chlorobium tepidum) protein is Acetylglutamate kinase.